A 693-amino-acid chain; its full sequence is Putative tyrosinase-like protein tyr-3 (693 aa).

The signal sequence occupies residues 1 to 18 (MIRYIILLVYFLIFEVNS). Cu cation-binding residues include H142, H152, H161, H281, H285, and H308. ShKT domains lie at 472–506 (CFNE…CRQC), 516–550 (CSDR…CQKC), 591–625 (CYNE…CGVC), and 634–667 (CADY…CNTC). Disulfide bonds link C472–C506, C479–C499, C488–C503, C516–C550, C523–C543, C532–C547, C591–C625, C598–C618, C607–C622, C634–C667, C641–C660, and C650–C664.

It belongs to the tyrosinase family. It depends on Cu(2+) as a cofactor.

The sequence is that of Putative tyrosinase-like protein tyr-3 (tyr-3) from Caenorhabditis elegans.